The following is a 331-amino-acid chain: D-alanine--D-alanine ligase (331 aa).

One can recognise an ATP-grasp domain in the interval 121-327; that stretch reads KLWYDALGIP…FSQFLENCVR (207 aa). 151 to 206 is an ATP binding site; that stretch reads AFESWGKVFVKAARQGSSVGCYQVNQVEELSEAINKAFTFSDQVLIEKSVVPRELE. 3 residues coordinate Mg(2+): Asp281, Glu294, and Asn296.

Belongs to the D-alanine--D-alanine ligase family. The cofactor is Mg(2+). Mn(2+) is required as a cofactor.

It is found in the cytoplasm. The enzyme catalyses 2 D-alanine + ATP = D-alanyl-D-alanine + ADP + phosphate + H(+). The protein operates within cell wall biogenesis; peptidoglycan biosynthesis. Its function is as follows. Cell wall formation. The polypeptide is D-alanine--D-alanine ligase (Vibrio atlanticus (strain LGP32) (Vibrio splendidus (strain Mel32))).